We begin with the raw amino-acid sequence, 326 residues long: Flap endonuclease 1 (326 aa).

Residues 1–100 (MGNAALRQLA…EEVQERRVAR (100 aa)) form an N-domain region. Mg(2+) is bound by residues Asp28, Asp82, Glu154, Glu156, Asp175, Asp177, and Asp225. Positions 118-246 (AASRLEARTQ…TAISAINDHG (129 aa)) are I-domain. Positions 318–326 (VQTGLDEWI) are interaction with PCNA.

Belongs to the XPG/RAD2 endonuclease family. FEN1 subfamily. As to quaternary structure, interacts with PCNA. PCNA stimulates the nuclease activity without altering cleavage specificity. The cofactor is Mg(2+).

Functionally, structure-specific nuclease with 5'-flap endonuclease and 5'-3' exonuclease activities involved in DNA replication and repair. During DNA replication, cleaves the 5'-overhanging flap structure that is generated by displacement synthesis when DNA polymerase encounters the 5'-end of a downstream Okazaki fragment. Binds the unpaired 3'-DNA end and kinks the DNA to facilitate 5' cleavage specificity. Cleaves one nucleotide into the double-stranded DNA from the junction in flap DNA, leaving a nick for ligation. Also involved in the base excision repair (BER) pathway. Acts as a genome stabilization factor that prevents flaps from equilibrating into structures that lead to duplications and deletions. Also possesses 5'-3' exonuclease activity on nicked or gapped double-stranded DNA. The sequence is that of Flap endonuclease 1 from Haloquadratum walsbyi (strain DSM 16790 / HBSQ001).